We begin with the raw amino-acid sequence, 423 residues long: Serine hydroxymethyltransferase (423 aa).

Residues Leu-120 and 124–126 (GHL) contribute to the (6S)-5,6,7,8-tetrahydrofolate site. At Lys-229 the chain carries N6-(pyridoxal phosphate)lysine. (6S)-5,6,7,8-tetrahydrofolate is bound by residues Glu-245 and 353-355 (SPF).

It belongs to the SHMT family. As to quaternary structure, homodimer. Pyridoxal 5'-phosphate is required as a cofactor.

The protein localises to the cytoplasm. It catalyses the reaction (6R)-5,10-methylene-5,6,7,8-tetrahydrofolate + glycine + H2O = (6S)-5,6,7,8-tetrahydrofolate + L-serine. Its pathway is one-carbon metabolism; tetrahydrofolate interconversion. It functions in the pathway amino-acid biosynthesis; glycine biosynthesis; glycine from L-serine: step 1/1. Its function is as follows. Catalyzes the reversible interconversion of serine and glycine with tetrahydrofolate (THF) serving as the one-carbon carrier. This reaction serves as the major source of one-carbon groups required for the biosynthesis of purines, thymidylate, methionine, and other important biomolecules. Also exhibits THF-independent aldolase activity toward beta-hydroxyamino acids, producing glycine and aldehydes, via a retro-aldol mechanism. The sequence is that of Serine hydroxymethyltransferase from Prochlorococcus marinus (strain MIT 9312).